The following is a 135-amino-acid chain: RxLR effector protein Avh5 (135 aa).

Residues 1 to 19 (MRLQFFLVMAVATLATISA) form the signal peptide. The RxLR-dEER motif lies at 43–71 (RFLRTADTDIVYEPKVHNPGKKQVFIEDK). A 1,2-diacyl-sn-glycero-3-phospho-(1D-myo-inositol-3-phosphate)-binding residues include Lys81, Lys83, and Lys84.

This sequence belongs to the RxLR effector family.

It localises to the secreted. The protein resides in the host cell. Functionally, effector that suppresses plant defense responses during the early stages of pathogen infection. Suppresses cell death induced by effectors and PAMPs in plant hosts. The chain is RxLR effector protein Avh5 from Phytophthora sojae (Soybean stem and root rot agent).